Reading from the N-terminus, the 433-residue chain is Actin-related protein 4 (433 aa).

Residues 289-317 are disordered; it reads GSDEEMNEEPSKPIEQTENNEVSQQDSSV. Residues 302-317 are compositionally biased toward polar residues; sequence IEQTENNEVSQQDSSV.

The protein belongs to the actin family. ARP4 subfamily. Component of the NuA4 histone acetyltransferase complex, of the INO80 chromatin remodeling complex, and of the SWR1 chromatin remodeling complex.

It is found in the nucleus. Chromatin interaction component of the NuA4 histone acetyltransferase complex which is involved in transcriptional activation of selected genes principally by acetylation of nucleosomal histone H4 and H2A. The NuA4 complex is also involved in DNA repair. Is required for NuA4 complex integrity. Component of the SWR1 complex which mediates the ATP-dependent exchange of histone H2A for the H2A variant HZT1 leading to transcriptional regulation of selected genes by chromatin remodeling. Component of the INO80 complex which remodels chromatin by shifting nucleosomes and is involved in DNA repair. The sequence is that of Actin-related protein 4 (alp5) from Schizosaccharomyces pombe (strain 972 / ATCC 24843) (Fission yeast).